A 241-amino-acid chain; its full sequence is Tetrahydromethanopterin S-methyltransferase subunit A (241 aa).

Topologically, residues 1–220 (MANKREPAPG…AKWQAGYYNG (220 aa)) are cytoplasmic. His-85 lines the 5-hydroxybenzimidazolylcob(I)amide pocket. The chain crosses the membrane as a helical span at residues 221-241 (KIQGIATGLFLMLLIMGILMF).

It belongs to the MtrA family. The complex is composed of 8 subunits; MtrA, MtrB, MtrC, MtrD, MtrE, MtrF, MtrG and MtrH. It depends on 5-hydroxybenzimidazolylcob(I)amide as a cofactor.

The protein resides in the cell membrane. It catalyses the reaction 5-methyl-5,6,7,8-tetrahydromethanopterin + coenzyme M + 2 Na(+)(in) = 5,6,7,8-tetrahydromethanopterin + methyl-coenzyme M + 2 Na(+)(out). Its pathway is one-carbon metabolism; methanogenesis from CO(2); methyl-coenzyme M from 5,10-methylene-5,6,7,8-tetrahydromethanopterin: step 2/2. Functionally, part of a complex that catalyzes the formation of methyl-coenzyme M and tetrahydromethanopterin from coenzyme M and methyl-tetrahydromethanopterin. This is an energy-conserving, sodium-ion translocating step. The sequence is that of Tetrahydromethanopterin S-methyltransferase subunit A from Methanocaldococcus jannaschii (strain ATCC 43067 / DSM 2661 / JAL-1 / JCM 10045 / NBRC 100440) (Methanococcus jannaschii).